Here is a 444-residue protein sequence, read N- to C-terminus: Divalent metal cation transporter MntH (444 aa).

Helical transmembrane passes span 39 to 59, 69 to 89, 109 to 128, 146 to 166, 175 to 195, 215 to 235, 264 to 284, 304 to 324, 346 to 366, 372 to 392, and 417 to 437; these read LLFA…GNFA, GYTL…FQAL, FSRP…AMAT, LPLI…LLFE, LVIG…MFIA, TALT…AVYL, VILA…MAAS, TPLL…TSGI, IPVW…ILAG, ALVI…IALI, and AAAI…GFTI.

The protein belongs to the NRAMP family.

The protein resides in the cell inner membrane. Functionally, h(+)-stimulated, divalent metal cation uptake system. The polypeptide is Divalent metal cation transporter MntH (Granulibacter bethesdensis (strain ATCC BAA-1260 / CGDNIH1)).